The primary structure comprises 391 residues: Mannonate dehydratase (391 aa).

Residues 334–359 form a disordered region; the sequence is ERRRERDGGPRLPLRPDHGHHLLDDL.

It belongs to the mannonate dehydratase family. It depends on Fe(2+) as a cofactor. The cofactor is Mn(2+).

The enzyme catalyses D-mannonate = 2-dehydro-3-deoxy-D-gluconate + H2O. It participates in carbohydrate metabolism; pentose and glucuronate interconversion. In terms of biological role, catalyzes the dehydration of D-mannonate. The polypeptide is Mannonate dehydratase (Chromohalobacter salexigens (strain ATCC BAA-138 / DSM 3043 / CIP 106854 / NCIMB 13768 / 1H11)).